Reading from the N-terminus, the 180-residue chain is Translation initiation factor IF-3 (180 aa).

It belongs to the IF-3 family. Monomer.

The protein localises to the cytoplasm. IF-3 binds to the 30S ribosomal subunit and shifts the equilibrium between 70S ribosomes and their 50S and 30S subunits in favor of the free subunits, thus enhancing the availability of 30S subunits on which protein synthesis initiation begins. This chain is Translation initiation factor IF-3, found in Pasteurella multocida (strain Pm70).